Reading from the N-terminus, the 393-residue chain is Phosphoglycerate kinase (393 aa).

Substrate contacts are provided by residues 21-23, R36, 59-62, R114, and R147; these read DIN and HFGR. Residues K197, E319, and 349-352 each bind ATP; that span reads GGDT.

It belongs to the phosphoglycerate kinase family. As to quaternary structure, monomer.

Its subcellular location is the cytoplasm. The enzyme catalyses (2R)-3-phosphoglycerate + ATP = (2R)-3-phospho-glyceroyl phosphate + ADP. It functions in the pathway carbohydrate degradation; glycolysis; pyruvate from D-glyceraldehyde 3-phosphate: step 2/5. The protein is Phosphoglycerate kinase of Dinoroseobacter shibae (strain DSM 16493 / NCIMB 14021 / DFL 12).